Consider the following 514-residue polypeptide: Putative selenium-binding protein (514 aa).

The protein belongs to the selenium-binding protein family.

The protein is Putative selenium-binding protein of Caenorhabditis briggsae.